Here is a 387-residue protein sequence, read N- to C-terminus: 3-ketoacyl-CoA thiolase (387 aa).

Catalysis depends on cysteine 91, which acts as the Acyl-thioester intermediate. Active-site proton acceptor residues include histidine 343 and cysteine 373.

This sequence belongs to the thiolase-like superfamily. Thiolase family. As to quaternary structure, heterotetramer of two alpha chains (FadB) and two beta chains (FadA).

It is found in the cytoplasm. The catalysed reaction is an acyl-CoA + acetyl-CoA = a 3-oxoacyl-CoA + CoA. Its pathway is lipid metabolism; fatty acid beta-oxidation. Catalyzes the final step of fatty acid oxidation in which acetyl-CoA is released and the CoA ester of a fatty acid two carbons shorter is formed. The chain is 3-ketoacyl-CoA thiolase from Vibrio vulnificus (strain CMCP6).